A 400-amino-acid chain; its full sequence is Subtilisin-like protease CPC735_013700 (400 aa).

A signal peptide spans 1–19 (MGFVKILSLSLAATAVADA). The propeptide occupies 20 to 116 (ATILSPRYPN…IEPNQIVTIS (97 aa)). Residues 36-115 (YIVVMKDGVS…FIEPNQIVTI (80 aa)) form the Inhibitor I9 domain. The region spanning 126–400 (SWGLPRISVK…RKLLYNNSGK (275 aa)) is the Peptidase S8 domain. Catalysis depends on charge relay system residues Asp161 and His192. Asn252 carries N-linked (GlcNAc...) asparagine glycosylation. Catalysis depends on Ser346, which acts as the Charge relay system. Residue Asn396 is glycosylated (N-linked (GlcNAc...) asparagine).

This sequence belongs to the peptidase S8 family.

It is found in the secreted. Functionally, secreted subtilisin-like serine protease with keratinolytic activity that contributes to pathogenicity. In Coccidioides posadasii (strain C735) (Valley fever fungus), this protein is Subtilisin-like protease CPC735_013700.